Here is a 426-residue protein sequence, read N- to C-terminus: 3-phosphoshikimate 1-carboxyvinyltransferase (426 aa).

3-phosphoshikimate-binding residues include Lys-22, Ser-23, and Arg-27. Lys-22 provides a ligand contact to phosphoenolpyruvate. Phosphoenolpyruvate-binding residues include Gly-96 and Arg-124. Residues Ser-170, Ser-171, Gln-172, Ser-198, Asp-314, Asn-337, and Lys-341 each coordinate 3-phosphoshikimate. Position 172 (Gln-172) interacts with phosphoenolpyruvate. Asp-314 functions as the Proton acceptor in the catalytic mechanism. 3 residues coordinate phosphoenolpyruvate: Arg-345, Arg-387, and Lys-412.

The protein belongs to the EPSP synthase family. In terms of assembly, monomer.

The protein localises to the cytoplasm. The enzyme catalyses 3-phosphoshikimate + phosphoenolpyruvate = 5-O-(1-carboxyvinyl)-3-phosphoshikimate + phosphate. It participates in metabolic intermediate biosynthesis; chorismate biosynthesis; chorismate from D-erythrose 4-phosphate and phosphoenolpyruvate: step 6/7. Catalyzes the transfer of the enolpyruvyl moiety of phosphoenolpyruvate (PEP) to the 5-hydroxyl of shikimate-3-phosphate (S3P) to produce enolpyruvyl shikimate-3-phosphate and inorganic phosphate. The protein is 3-phosphoshikimate 1-carboxyvinyltransferase of Shewanella sp. (strain MR-7).